The following is a 735-amino-acid chain: 1,4-alpha-glucan branching enzyme GlgB (735 aa).

Asp-414 serves as the catalytic Nucleophile. Catalysis depends on Glu-469, which acts as the Proton donor.

Belongs to the glycosyl hydrolase 13 family. GlgB subfamily. Monomer.

The enzyme catalyses Transfers a segment of a (1-&gt;4)-alpha-D-glucan chain to a primary hydroxy group in a similar glucan chain.. It participates in glycan biosynthesis; glycogen biosynthesis. Its function is as follows. Catalyzes the formation of the alpha-1,6-glucosidic linkages in glycogen by scission of a 1,4-alpha-linked oligosaccharide from growing alpha-1,4-glucan chains and the subsequent attachment of the oligosaccharide to the alpha-1,6 position. This Burkholderia lata (strain ATCC 17760 / DSM 23089 / LMG 22485 / NCIMB 9086 / R18194 / 383) protein is 1,4-alpha-glucan branching enzyme GlgB.